Consider the following 279-residue polypeptide: Tryptophan synthase alpha chain (279 aa).

Catalysis depends on proton acceptor residues E50 and D61.

Belongs to the TrpA family. As to quaternary structure, tetramer of two alpha and two beta chains.

The catalysed reaction is (1S,2R)-1-C-(indol-3-yl)glycerol 3-phosphate + L-serine = D-glyceraldehyde 3-phosphate + L-tryptophan + H2O. It functions in the pathway amino-acid biosynthesis; L-tryptophan biosynthesis; L-tryptophan from chorismate: step 5/5. In terms of biological role, the alpha subunit is responsible for the aldol cleavage of indoleglycerol phosphate to indole and glyceraldehyde 3-phosphate. This is Tryptophan synthase alpha chain from Brucella abortus (strain S19).